A 275-amino-acid chain; its full sequence is Ribosomal RNA small subunit methyltransferase A (275 aa).

S-adenosyl-L-methionine is bound by residues N19, L21, G46, E71, D94, and N117.

Belongs to the class I-like SAM-binding methyltransferase superfamily. rRNA adenine N(6)-methyltransferase family. RsmA subfamily.

It localises to the cytoplasm. It carries out the reaction adenosine(1518)/adenosine(1519) in 16S rRNA + 4 S-adenosyl-L-methionine = N(6)-dimethyladenosine(1518)/N(6)-dimethyladenosine(1519) in 16S rRNA + 4 S-adenosyl-L-homocysteine + 4 H(+). In terms of biological role, specifically dimethylates two adjacent adenosines (A1518 and A1519) in the loop of a conserved hairpin near the 3'-end of 16S rRNA in the 30S particle. May play a critical role in biogenesis of 30S subunits. This chain is Ribosomal RNA small subunit methyltransferase A, found in Burkholderia mallei (strain NCTC 10247).